A 373-amino-acid polypeptide reads, in one-letter code: G protein-coupled receptor 137Ba (373 aa).

At 1–15 the chain is on the lumenal side; that stretch reads MQKDSLPTLSPAVPP. A helical transmembrane segment spans residues 16 to 36; the sequence is YVMLGLTVAYTIFYCLLFVFV. Topologically, residues 37–55 are cytoplasmic; the sequence is YVQLWLVLRYRHKRFSYQT. A helical transmembrane segment spans residues 56–76; sequence VFLFLCLLWAALRALLFSFYF. The Lumenal segment spans residues 77–84; that stretch reads KNCVTANT. The helical transmembrane segment at 85–105 threads the bilayer; that stretch reads LGPFCFWLLYCFPVCLQFFTL. At 106–135 the chain is on the cytoplasmic side; that stretch reads SLMNLYFAQVIFKAKSKYSPELQKYRLPLY. The chain crosses the membrane as a helical span at residues 136-156; the sequence is LLFLSISLLFLLVNLTCALLV. Topologically, residues 157-176 are lumenal; it reads KINRANTETVVLVRVTVNDS. Residues 177–197 traverse the membrane as a helical segment; that stretch reads LFVLCAVSLSLCLYRIAKMSL. Residues 198-213 are Cytoplasmic-facing; the sequence is ANIYLEAKGTSVCQVT. A helical membrane pass occupies residues 214–234; sequence LIGVTVVLLYSSRACYNLVVL. At 235 to 268 the chain is on the lumenal side; it reads ALTKIKSINSFDYDWYNVSDQADLKSTLGDAGYV. Residues 269-289 traverse the membrane as a helical segment; the sequence is VFGVILFVWELLPTSLVVYFF. Residues 290 to 373 lie on the Cytoplasmic side of the membrane; the sequence is RVRKPTLDRS…HLAPEELNPY (84 aa).

This sequence belongs to the GPR137 family.

Its subcellular location is the lysosome membrane. Lysosomal integral membrane protein that regulates the localization and activity of mTORC1, a signaling complex promoting cell growth in response to growth factors, energy levels, and amino acids. Interacts with Rag GTPases and increases the lysosomial localization and activity of Rag GTPases and thereby regulates mTORC1 translocation and activity in lysosome. Also acts as a negative regulator of osteoclast activity. May be involved in interleukin-4-induced M2 macrophage polarization. In terms of biological role, also acts as a negative regulator of osteoclast activity. May be involved in interleukin-4-induced M2 macrophage polarization. In Danio rerio (Zebrafish), this protein is G protein-coupled receptor 137Ba.